Reading from the N-terminus, the 415-residue chain is Mitogen-activated protein kinase MPS1 (415 aa).

A Protein kinase domain is found at 23–314 (YTVTKELGQG…VEQALEHPYL (292 aa)). Residues 29–37 (LGQGAYGIV) and Lys-52 each bind ATP. Residues 363–394 (GAGGHGAPHAPQVPIPAGAGQGQWKAEDPRPQ) form a disordered region.

The protein belongs to the protein kinase superfamily. Ser/Thr protein kinase family. MAP kinase subfamily. As to quaternary structure, interacts with transcription factor MIG1. Interacts with transcription factor SWI6. Requires Mg(2+) as cofactor.

The enzyme catalyses L-seryl-[protein] + ATP = O-phospho-L-seryl-[protein] + ADP + H(+). It catalyses the reaction L-threonyl-[protein] + ATP = O-phospho-L-threonyl-[protein] + ADP + H(+). Its function is as follows. Mitogen-activated protein kinase; part of the MCK1-MKK2-MPS1 MAP kinase (MAPK) signal transduction cascade that is essential for cell wall integrity and plant infection, but not for plant defense responses. Beside its role in pathogenesis, the MPS1 cascade is active in conidiation and cellular stress responses. Targets downstream of the MPS1-MAPK pathway include transcription factors MIG1 and SWI6, as well as GSK1 and MPG1. This Pyricularia oryzae (strain 70-15 / ATCC MYA-4617 / FGSC 8958) (Rice blast fungus) protein is Mitogen-activated protein kinase MPS1.